A 209-amino-acid chain; its full sequence is FMN-dependent NADH:quinone oxidoreductase 2 (209 aa).

FMN contacts are provided by residues Ser9, 15-17, and 97-100; these read SVS and MWNF.

Belongs to the azoreductase type 1 family. In terms of assembly, homodimer. It depends on FMN as a cofactor.

It carries out the reaction 2 a quinone + NADH + H(+) = 2 a 1,4-benzosemiquinone + NAD(+). It catalyses the reaction N,N-dimethyl-1,4-phenylenediamine + anthranilate + 2 NAD(+) = 2-(4-dimethylaminophenyl)diazenylbenzoate + 2 NADH + 2 H(+). Quinone reductase that provides resistance to thiol-specific stress caused by electrophilic quinones. In terms of biological role, also exhibits azoreductase activity. Catalyzes the reductive cleavage of the azo bond in aromatic azo compounds to the corresponding amines. This Pseudomonas syringae pv. tomato (strain ATCC BAA-871 / DC3000) protein is FMN-dependent NADH:quinone oxidoreductase 2.